The sequence spans 80 residues: FXYD domain-containing ion transport regulator 7 (80 aa).

Residues 1–23 (MATPTQTPTKAPEEPDPFYYDYN) are Extracellular-facing. Residues Thr3, Thr5, and Thr9 are each glycosylated (O-linked (GlcNAc) threonine). A helical transmembrane segment spans residues 24–46 (TVQTVGMTLATILFLLGILIVIS). At 47–80 (KKVKCRKADSRSESPTCKSCKSELPSSAPGGGGV) the chain is on the cytoplasmic side. Positions 54–80 (ADSRSESPTCKSCKSELPSSAPGGGGV) are disordered. Position 73 is a phosphoserine (Ser73).

The protein belongs to the FXYD family. Regulatory subunit of the sodium/potassium-transporting ATPase which is composed of a catalytic alpha subunit, a non-catalytic beta subunit and a FXYD regulatory unit that modulates the enzymatic activity in a tissue- and isoform-specific way by changing affinities of the Na+/K+-ATPase toward Na(+), K(+) or ATP. O-glycosylated; required for stabilization and translocation to the plasma membrane.

Its subcellular location is the cell membrane. Associates with and regulates the activity of the sodium/potassium-transporting ATPase (NKA) which catalyzes the hydrolysis of ATP coupled with the exchange of Na(+) and K(+) ions across the plasma membrane. Reduces the apparent affinity for external K(+), an effect that depends on the presence of external Na(+) and voltage. Increases the apparent affinity for intracellular Na(+). This is FXYD domain-containing ion transport regulator 7 (FXYD7) from Homo sapiens (Human).